Reading from the N-terminus, the 88-residue chain is Small ribosomal subunit protein uS19 (88 aa).

Belongs to the universal ribosomal protein uS19 family.

In terms of biological role, protein S19 forms a complex with S13 that binds strongly to the 16S ribosomal RNA. The polypeptide is Small ribosomal subunit protein uS19 (Chlamydia caviae (strain ATCC VR-813 / DSM 19441 / 03DC25 / GPIC) (Chlamydophila caviae)).